A 183-amino-acid chain; its full sequence is CKLF-like MARVEL transmembrane domain-containing protein 6 (183 aa).

Residue Met1 is modified to N-acetylmethionine. Residues 1–20 form a disordered region; that stretch reads MENGAVYSPTTEEDPGPARG. The Cytoplasmic portion of the chain corresponds to 1–39; the sequence is MENGAVYSPTTEEDPGPARGPRSGLAAYCFLGRLPLLRR. Residue Ser8 is modified to Phosphoserine. Residues 33–160 form the MARVEL domain; the sequence is RLPLLRRVLK…DFVTMLYEKR (128 aa). Residues 40-60 form a helical membrane-spanning segment; sequence VLKGLQLSLSLLAFICEEVVS. At 61–67 the chain is on the extracellular side; it reads QCTLCGG. A helical transmembrane segment spans residues 68 to 88; that stretch reads LYFFEFVSCSAFLLSLLILIV. The Cytoplasmic segment spans residues 89–106; it reads YCTPFYERVDTTKVKSSD. Residues 107-127 traverse the membrane as a helical segment; that stretch reads FYITLGTGCVFLLASIIFVST. The Extracellular segment spans residues 128-134; the sequence is HDRTSAE. A helical transmembrane segment spans residues 135–155; sequence IAAIVFGFIASFMFLLDFVTM. Residues 156-183 are Cytoplasmic-facing; that stretch reads LYEKRQESQLRKSENTTRAEALTEPLNA. Thr171 is modified (phosphothreonine).

It belongs to the chemokine-like factor family. As to quaternary structure, interacts with PD-L1/CD274 (via transmembrane domain); the interaction is direct. Interacts with CMTM4. Interacts with CD58, ARG1, ENO1 and TMPO.

Its subcellular location is the cell membrane. It localises to the early endosome membrane. The protein localises to the recycling endosome membrane. Functionally, master regulator of recycling and plasma membrane expression of PD-L1/CD274, an immune inhibitory ligand critical for immune tolerance to self and antitumor immunity. Associates with both constitutive and IFNG-induced PD-L1/CD274 at recycling endosomes, where it protects PD-L1/CD274 from being targeted for lysosomal degradation, likely by preventing its ubiquitination. May stabilize PD-L1/CD274 expression on antigen presenting cells and potentiates inhibitory signaling by PDCD1/CD279, its receptor on T-cells, ultimately triggering T-cell anergy. The chain is CKLF-like MARVEL transmembrane domain-containing protein 6 (CMTM6) from Pongo abelii (Sumatran orangutan).